We begin with the raw amino-acid sequence, 534 residues long: Probable protein kinase UbiB (534 aa).

The helical transmembrane segment at 23–43 (DLLFDLPLPWFLLALRFALPW) threads the bilayer. The Protein kinase domain occupies 125–492 (RFDIEPLASA…WHKRKDDWFL (368 aa)). ATP contacts are provided by residues 131–139 (LASASVAQV) and K153. The Proton acceptor role is filled by D288. Transmembrane regions (helical) follow at residues 490-510 (WFLR…AAGG) and 512-532 (LHEL…YLIV).

This sequence belongs to the ABC1 family. UbiB subfamily.

Its subcellular location is the cell inner membrane. The protein operates within cofactor biosynthesis; ubiquinone biosynthesis [regulation]. Is probably a protein kinase regulator of UbiI activity which is involved in aerobic coenzyme Q (ubiquinone) biosynthesis. This chain is Probable protein kinase UbiB, found in Pseudomonas fluorescens (strain ATCC BAA-477 / NRRL B-23932 / Pf-5).